A 408-amino-acid chain; its full sequence is Imidazolonepropionase (408 aa).

Residues His-73 and His-75 each contribute to the Fe(3+) site. Residues His-73 and His-75 each contribute to the Zn(2+) site. Arg-82, Tyr-145, and His-178 together coordinate 4-imidazolone-5-propanoate. Residue Tyr-145 participates in N-formimidoyl-L-glutamate binding. His-243 is a binding site for Fe(3+). A Zn(2+)-binding site is contributed by His-243. Gln-246 contributes to the 4-imidazolone-5-propanoate binding site. Residue Asp-318 participates in Fe(3+) binding. Residue Asp-318 participates in Zn(2+) binding. N-formimidoyl-L-glutamate is bound by residues Asn-320 and Gly-322. Ser-323 provides a ligand contact to 4-imidazolone-5-propanoate.

The protein belongs to the metallo-dependent hydrolases superfamily. HutI family. Zn(2+) is required as a cofactor. Fe(3+) serves as cofactor.

The protein resides in the cytoplasm. The catalysed reaction is 4-imidazolone-5-propanoate + H2O = N-formimidoyl-L-glutamate. Its pathway is amino-acid degradation; L-histidine degradation into L-glutamate; N-formimidoyl-L-glutamate from L-histidine: step 3/3. Functionally, catalyzes the hydrolytic cleavage of the carbon-nitrogen bond in imidazolone-5-propanoate to yield N-formimidoyl-L-glutamate. It is the third step in the universal histidine degradation pathway. The sequence is that of Imidazolonepropionase from Shewanella baltica (strain OS195).